The primary structure comprises 346 residues: Phosphoribosylformylglycinamidine cyclo-ligase (346 aa).

This sequence belongs to the AIR synthase family.

It is found in the cytoplasm. The enzyme catalyses 2-formamido-N(1)-(5-O-phospho-beta-D-ribosyl)acetamidine + ATP = 5-amino-1-(5-phospho-beta-D-ribosyl)imidazole + ADP + phosphate + H(+). It participates in purine metabolism; IMP biosynthesis via de novo pathway; 5-amino-1-(5-phospho-D-ribosyl)imidazole from N(2)-formyl-N(1)-(5-phospho-D-ribosyl)glycinamide: step 2/2. This Photorhabdus laumondii subsp. laumondii (strain DSM 15139 / CIP 105565 / TT01) (Photorhabdus luminescens subsp. laumondii) protein is Phosphoribosylformylglycinamidine cyclo-ligase.